A 282-amino-acid polypeptide reads, in one-letter code: Pyridoxal 5'-phosphate synthase subunit PdxS (282 aa).

D-ribose 5-phosphate is bound at residue Asp14. Residue Lys71 is the Schiff-base intermediate with D-ribose 5-phosphate of the active site. Gly143 contacts D-ribose 5-phosphate. Arg155 is a binding site for D-glyceraldehyde 3-phosphate. D-ribose 5-phosphate is bound by residues Gly204 and 225 to 226; that span reads GS.

The protein belongs to the PdxS/SNZ family. In terms of assembly, in the presence of PdxT, forms a dodecamer of heterodimers.

It carries out the reaction aldehydo-D-ribose 5-phosphate + D-glyceraldehyde 3-phosphate + L-glutamine = pyridoxal 5'-phosphate + L-glutamate + phosphate + 3 H2O + H(+). It functions in the pathway cofactor biosynthesis; pyridoxal 5'-phosphate biosynthesis. In terms of biological role, catalyzes the formation of pyridoxal 5'-phosphate from ribose 5-phosphate (RBP), glyceraldehyde 3-phosphate (G3P) and ammonia. The ammonia is provided by the PdxT subunit. Can also use ribulose 5-phosphate and dihydroxyacetone phosphate as substrates, resulting from enzyme-catalyzed isomerization of RBP and G3P, respectively. The polypeptide is Pyridoxal 5'-phosphate synthase subunit PdxS (Treponema denticola (strain ATCC 35405 / DSM 14222 / CIP 103919 / JCM 8153 / KCTC 15104)).